Reading from the N-terminus, the 404-residue chain is Cysteine desulfurase IscS (404 aa).

Pyridoxal 5'-phosphate is bound by residues 75–76 (AT), Asn-155, Gln-183, and 203–205 (SGH). An N6-(pyridoxal phosphate)lysine modification is found at Lys-206. Residue Thr-243 participates in pyridoxal 5'-phosphate binding. Cys-328 acts as the Cysteine persulfide intermediate in catalysis. Cys-328 is a binding site for [2Fe-2S] cluster.

It belongs to the class-V pyridoxal-phosphate-dependent aminotransferase family. NifS/IscS subfamily. In terms of assembly, homodimer. Forms a heterotetramer with IscU, interacts with other sulfur acceptors. Requires pyridoxal 5'-phosphate as cofactor.

It localises to the cytoplasm. It carries out the reaction (sulfur carrier)-H + L-cysteine = (sulfur carrier)-SH + L-alanine. Its pathway is cofactor biosynthesis; iron-sulfur cluster biosynthesis. In terms of biological role, master enzyme that delivers sulfur to a number of partners involved in Fe-S cluster assembly, tRNA modification or cofactor biosynthesis. Catalyzes the removal of elemental sulfur and selenium atoms from cysteine and selenocysteine to produce alanine. Functions as a sulfur delivery protein for Fe-S cluster synthesis onto IscU, an Fe-S scaffold assembly protein, as well as other S acceptor proteins. Also functions as a selenium delivery protein in the pathway for the biosynthesis of selenophosphate. This Salmonella schwarzengrund (strain CVM19633) protein is Cysteine desulfurase IscS.